A 449-amino-acid polypeptide reads, in one-letter code: Pentalenene oxygenase (449 aa).

Residues 251-273 (VITVMAAGTETVAGTLTWIFHLL) form a helical membrane-spanning segment. C393 is a heme binding site.

Belongs to the cytochrome P450 family.

Its subcellular location is the membrane. The enzyme catalyses pentalenene + 4 reduced [2Fe-2S]-[ferredoxin] + 2 O2 + 4 H(+) = pentalen-13-al + 4 oxidized [2Fe-2S]-[ferredoxin] + 3 H2O. It functions in the pathway antibiotic biosynthesis; neopentalenolactone biosynthesis. Functionally, catalyzes the conversion of pentalenene to pentalen-13-al by stepwise oxidation via pentalen-13-ol, a precursor of neopentalenolactone antibiotic. This chain is Pentalenene oxygenase (ptlI), found in Streptomyces avermitilis (strain ATCC 31267 / DSM 46492 / JCM 5070 / NBRC 14893 / NCIMB 12804 / NRRL 8165 / MA-4680).